Consider the following 47-residue polypeptide: Defensin-like protein 2 (47 aa).

Cystine bridges form between Cys5–Cys47, Cys16–Cys36, Cys22–Cys43, and Cys26–Cys45.

This sequence belongs to the DEFL family.

In terms of biological role, fabatins have antibacterial activity against Gram-positive and Gram-negative bacteria. High activity against P.aeruginosa. No activity against S.cerevisiae and C.albicans. The polypeptide is Defensin-like protein 2 (Vicia faba (Broad bean)).